A 250-amino-acid chain; its full sequence is Ribosomal RNA small subunit methyltransferase J (250 aa).

S-adenosyl-L-methionine-binding positions include 96–97 (RD) and Asp-168.

It belongs to the methyltransferase superfamily. RsmJ family.

The protein localises to the cytoplasm. The catalysed reaction is guanosine(1516) in 16S rRNA + S-adenosyl-L-methionine = N(2)-methylguanosine(1516) in 16S rRNA + S-adenosyl-L-homocysteine + H(+). Functionally, specifically methylates the guanosine in position 1516 of 16S rRNA. The protein is Ribosomal RNA small subunit methyltransferase J of Neisseria meningitidis serogroup B (strain ATCC BAA-335 / MC58).